Reading from the N-terminus, the 185-residue chain is Large ribosomal subunit protein uL5 (185 aa).

The protein belongs to the universal ribosomal protein uL5 family. In terms of assembly, part of the 50S ribosomal subunit; part of the 5S rRNA/L5/L18/L25 subcomplex. Contacts the 5S rRNA and the P site tRNA. Forms a bridge to the 30S subunit in the 70S ribosome.

Functionally, this is one of the proteins that bind and probably mediate the attachment of the 5S RNA into the large ribosomal subunit, where it forms part of the central protuberance. In the 70S ribosome it contacts protein S13 of the 30S subunit (bridge B1b), connecting the 2 subunits; this bridge is implicated in subunit movement. Contacts the P site tRNA; the 5S rRNA and some of its associated proteins might help stabilize positioning of ribosome-bound tRNAs. The sequence is that of Large ribosomal subunit protein uL5 from Bartonella quintana (strain Toulouse) (Rochalimaea quintana).